Reading from the N-terminus, the 778-residue chain is Lon protease (778 aa).

The Lon N-terminal domain maps to 6–207 (LPLMALRDMV…TVISMLNSNI (202 aa)). Residue 356 to 363 (GPPGVGKT) coordinates ATP. A Lon proteolytic domain is found at 592–773 (EDQIGSTTGL…DQVLKHALVG (182 aa)). Residues serine 679 and lysine 722 contribute to the active site.

The protein belongs to the peptidase S16 family. As to quaternary structure, homohexamer. Organized in a ring with a central cavity.

It is found in the cytoplasm. It carries out the reaction Hydrolysis of proteins in presence of ATP.. Its function is as follows. ATP-dependent serine protease that mediates the selective degradation of mutant and abnormal proteins as well as certain short-lived regulatory proteins. Required for cellular homeostasis and for survival from DNA damage and developmental changes induced by stress. Degrades polypeptides processively to yield small peptide fragments that are 5 to 10 amino acids long. Binds to DNA in a double-stranded, site-specific manner. The sequence is that of Lon protease from Rickettsia conorii (strain ATCC VR-613 / Malish 7).